The chain runs to 438 residues: Cyclic 2,3-diphosphoglycerate synthetase (438 aa).

It belongs to the cyclic 2,3-diphosphoglycerate synthetase family.

The protein resides in the cytoplasm. The enzyme catalyses (2R)-2,3-bisphosphoglycerate + ATP + H(+) = cyclic (2R)-2,3-bisphosphoglycerate + ADP + phosphate. In terms of biological role, catalyzes the formation of cyclic 2,3-diphosphoglycerate (cDPG) by formation of an intramolecular phosphoanhydride bond at the expense of ATP. The chain is Cyclic 2,3-diphosphoglycerate synthetase from Thermococcus gammatolerans (strain DSM 15229 / JCM 11827 / EJ3).